A 217-amino-acid polypeptide reads, in one-letter code: Meiotically up-regulated gene 37 protein (217 aa).

In terms of biological role, has a role in meiosis. In Schizosaccharomyces pombe (strain 972 / ATCC 24843) (Fission yeast), this protein is Meiotically up-regulated gene 37 protein (mug37).